Here is a 432-residue protein sequence, read N- to C-terminus: Enolase (432 aa).

Q163 serves as a coordination point for (2R)-2-phosphoglycerate. The active-site Proton donor is the E205. Positions 242, 288, and 315 each coordinate Mg(2+). Positions 340, 369, 370, and 391 each coordinate (2R)-2-phosphoglycerate. K340 (proton acceptor) is an active-site residue.

This sequence belongs to the enolase family. In terms of assembly, homodimer. Mg(2+) serves as cofactor.

It is found in the cytoplasm. The protein localises to the secreted. Its subcellular location is the cell surface. The enzyme catalyses (2R)-2-phosphoglycerate = phosphoenolpyruvate + H2O. It participates in carbohydrate degradation; glycolysis; pyruvate from D-glyceraldehyde 3-phosphate: step 4/5. The covalent binding to the substrate causes inactivation of the enzyme, and possibly serves as a signal for the export of the protein. In terms of biological role, catalyzes the reversible conversion of 2-phosphoglycerate (2-PG) into phosphoenolpyruvate (PEP). It is essential for the degradation of carbohydrates via glycolysis. This is Enolase from Enterococcus hirae.